The following is an 88-amino-acid chain: U-scoloptoxin(12)-Sa1a (88 aa).

The first 20 residues, Met-1–Cys-20, serve as a signal peptide directing secretion.

Belongs to the scoloptoxin-12 family. Post-translationally, contains 3 disulfide bonds. In terms of tissue distribution, expressed by the venom gland.

Its subcellular location is the secreted. In Scolopendra alternans (Florida Keys giant centipede), this protein is U-scoloptoxin(12)-Sa1a.